The chain runs to 313 residues: Porphobilinogen deaminase (313 aa).

At Cys241 the chain carries S-(dipyrrolylmethanemethyl)cysteine.

It belongs to the HMBS family. As to quaternary structure, monomer. Requires dipyrromethane as cofactor.

The catalysed reaction is 4 porphobilinogen + H2O = hydroxymethylbilane + 4 NH4(+). It functions in the pathway porphyrin-containing compound metabolism; protoporphyrin-IX biosynthesis; coproporphyrinogen-III from 5-aminolevulinate: step 2/4. Its pathway is porphyrin-containing compound metabolism; chlorophyll biosynthesis. In terms of biological role, tetrapolymerization of the monopyrrole PBG into the hydroxymethylbilane pre-uroporphyrinogen in several discrete steps. In Chlorobium phaeovibrioides (strain DSM 265 / 1930) (Prosthecochloris vibrioformis (strain DSM 265)), this protein is Porphobilinogen deaminase.